A 299-amino-acid chain; its full sequence is Porphobilinogen deaminase (299 aa).

Position 242 is an S-(dipyrrolylmethanemethyl)cysteine (Cys-242).

It belongs to the HMBS family. Monomer. The cofactor is dipyrromethane.

The catalysed reaction is 4 porphobilinogen + H2O = hydroxymethylbilane + 4 NH4(+). It participates in porphyrin-containing compound metabolism; protoporphyrin-IX biosynthesis; coproporphyrinogen-III from 5-aminolevulinate: step 2/4. Its function is as follows. Tetrapolymerization of the monopyrrole PBG into the hydroxymethylbilane pre-uroporphyrinogen in several discrete steps. The sequence is that of Porphobilinogen deaminase from Rickettsia typhi (strain ATCC VR-144 / Wilmington).